The sequence spans 450 residues: MSQKLKVVTIGGGSSYTPELLEGFIKRYHELPVSELWLVDVEGGKPKLDIIFDLCQRMIDNAGVPMKLYKTLDRREALKDADFVTTQLRVGQLPARELDERIPLSHGYLGQETNGAGGLFKGLRTIPVIFDIVKDVEELCPNAWVINFTNPAGMVTEAVYRHTGFKRFIGVCNIPIGMKMFIRDVLMLKDSDDLSIDLFGLNHMVFIKDVLINGKSRFAELLDGVASGQLKASSVKNIFDLPFSEGLIRSLNLLPCSYLLYYFKQKEMLAIEMGEYYKGGARAQVVQKVEKQLFELYKNPELKVKPKELEQRGGAYYSDAACEVINAIYNDKQAEHYVNIPHHGQIDNIPADWAVEMTCKLGRDGATPHPRITHFDDKVMGLIHTIKGFEIAASNAALSGEFNDVLLALNLSPLVHSDRDAELLAREMILAHEKWLPNFADCIAELKKAH.

Residue 5 to 73 (LKVVTIGGGS…VPMKLYKTLD (69 aa)) participates in NAD(+) binding. 2 residues coordinate substrate: arginine 96 and asparagine 150. Mn(2+) is bound by residues cysteine 172 and histidine 203. Tyrosine 258 acts as the Proton acceptor in catalysis.

Homotetramer. NAD(+) is required as a cofactor. The cofactor is Mn(2+). Requires Co(2+) as cofactor. Ni(2+) serves as cofactor.

The enzyme catalyses 6-phospho-beta-D-glucosyl-(1-&gt;4)-D-glucose + H2O = D-glucose 6-phosphate + D-glucose. Its function is as follows. Hydrolyzes a wide variety of P-beta-glucosides including cellobiose-6P, salicin-6P, arbutin-6P, gentiobiose-6P, methyl-beta-glucoside-6P and p-nitrophenyl-beta-D-glucopyranoside-6P. Is also able to hydrolyze phospho-N,N'-diacetylchitobiose. This Escherichia coli (strain K12) protein is 6-phospho-beta-glucosidase (chbF).